The following is a 334-amino-acid chain: 2,3-bisphosphoglycerate-dependent phosphoglycerate mutase 1 (334 aa).

Residues 1–48 (MATATSHQSVVSFASLRSSPSSTISQCGFKIDSSLSFTSKKTNFCKIK) constitute a chloroplast transit peptide. Substrate-binding positions include 84-91 (RHGESLWN), 97-98 (TG), Arg134, 188-191 (ERMY), Lys199, 215-216 (RR), and 259-260 (GN). Catalysis depends on His85, which acts as the Tele-phosphohistidine intermediate. The active-site Proton donor/acceptor is the Glu188.

This sequence belongs to the phosphoglycerate mutase family. BPG-dependent PGAM subfamily.

It localises to the plastid. The protein localises to the chloroplast. It carries out the reaction (2R)-2-phosphoglycerate = (2R)-3-phosphoglycerate. It functions in the pathway carbohydrate degradation; glycolysis; pyruvate from D-glyceraldehyde 3-phosphate: step 3/5. In terms of biological role, catalyzes the interconversion of 2-phosphoglycerate and 3-phosphoglycerate. This is 2,3-bisphosphoglycerate-dependent phosphoglycerate mutase 1 from Arabidopsis thaliana (Mouse-ear cress).